The primary structure comprises 83 residues: Putative defensin-like protein 257 (83 aa).

Residues 1–25 (MMNVSLKLSFLVFILVIMSNLGSEA) form the signal peptide. Disulfide bonds link Cys57–Cys73, Cys63–Cys80, and Cys67–Cys82.

It belongs to the DEFL family.

The protein resides in the secreted. This Arabidopsis thaliana (Mouse-ear cress) protein is Putative defensin-like protein 257.